Consider the following 420-residue polypeptide: Polyketide biosynthesis 3-hydroxy-3-methylglutaryl-ACP synthase PksG (420 aa).

Residue glutamate 82 is the Proton donor/acceptor of the active site. The Acyl-thioester intermediate role is filled by cysteine 114. Histidine 250 functions as the Proton donor/acceptor in the catalytic mechanism.

Belongs to the thiolase-like superfamily. HMG-CoA synthase family.

The protein resides in the cytoplasm. It catalyses the reaction 3-oxobutanoyl-[ACP] + acetyl-[ACP] + H2O = (3S)-hydroxy-3-methylglutaryl-[ACP] + holo-[ACP] + H(+). It functions in the pathway antibiotic biosynthesis; bacillaene biosynthesis. Involved in some intermediate steps for the synthesis of the antibiotic polyketide bacillaene which is involved in secondary metabolism. It catalyzes the aldol condensation between the acetyl group attached to the acyl-carrier-protein AcpK (Ac-AcpK) and a beta-ketothioester polyketide intermediate linked to one of the consecutive thiolation domains of PksL. The chain is Polyketide biosynthesis 3-hydroxy-3-methylglutaryl-ACP synthase PksG (pksG) from Bacillus subtilis (strain 168).